Here is a 573-residue protein sequence, read N- to C-terminus: Protein phosphatase EYA3 (573 aa).

At M1 the chain carries N-acetylmethionine. Disordered regions lie at residues M1 to N46 and T236 to S296. The span at S20 to N46 shows a compositional bias: polar residues. Over residues L254–S271 the composition is skewed to low complexity. A phosphoserine mark is found at S262 and S266. Residue D309 is the Nucleophile of the active site. Residues D309 and D311 each contribute to the Mg(2+) site. D311 acts as the Proton donor in catalysis. Phosphoserine is present on residues S438 and S472. Mg(2+) is bound at residue D537.

It belongs to the HAD-like hydrolase superfamily. EYA family. Interacts with SIX1 and DACH1, and probably SIX2, SIX4, SIX5. It depends on Mg(2+) as a cofactor. Ser-266 phosphorylation is required for localization at sites of DNA damage and directing interaction with H2AX.

Its subcellular location is the cytoplasm. It is found in the nucleus. The catalysed reaction is O-phospho-L-tyrosyl-[protein] + H2O = L-tyrosyl-[protein] + phosphate. In terms of biological role, tyrosine phosphatase that specifically dephosphorylates 'Tyr-142' of histone H2AX (H2AXY142ph). 'Tyr-142' phosphorylation of histone H2AX plays a central role in DNA repair and acts as a mark that distinguishes between apoptotic and repair responses to genotoxic stress. Promotes efficient DNA repair by dephosphorylating H2AX, promoting the recruitment of DNA repair complexes containing MDC1. Its function as histone phosphatase probably explains its role in transcription regulation during organogenesis. Coactivates SIX1, and seems to coactivate SIX2, SIX4 and SIX5. The repression of precursor cell proliferation in myoblasts by SIX1 is switched to activation through recruitment of EYA3 to the SIX1-DACH1 complex and seems to be dependent on EYA3 phosphatase activity. May be involved in development of the eye. The polypeptide is Protein phosphatase EYA3 (EYA3) (Homo sapiens (Human)).